The chain runs to 427 residues: Glutamate-1-semialdehyde 2,1-aminomutase (427 aa).

K265 bears the N6-(pyridoxal phosphate)lysine mark.

Belongs to the class-III pyridoxal-phosphate-dependent aminotransferase family. HemL subfamily. As to quaternary structure, homodimer. The cofactor is pyridoxal 5'-phosphate.

The protein localises to the cytoplasm. It carries out the reaction (S)-4-amino-5-oxopentanoate = 5-aminolevulinate. It participates in porphyrin-containing compound metabolism; protoporphyrin-IX biosynthesis; 5-aminolevulinate from L-glutamyl-tRNA(Glu): step 2/2. The sequence is that of Glutamate-1-semialdehyde 2,1-aminomutase from Photorhabdus laumondii subsp. laumondii (strain DSM 15139 / CIP 105565 / TT01) (Photorhabdus luminescens subsp. laumondii).